Consider the following 576-residue polypeptide: FtsZ-localized protein C (576 aa).

In terms of assembly, interacts with FtsZ filaments.

It localises to the cytoplasm. It is found in the cell inner membrane. Its function is as follows. Membrane anchor for FtsZ. Binds and recruits FtsZ polymers to membranes early in the cell cycle. May also improve the efficiency of cytokinesis through the regulation of cell wall hydrolysis. The chain is FtsZ-localized protein C from Caulobacter vibrioides (strain NA1000 / CB15N) (Caulobacter crescentus).